The primary structure comprises 218 residues: MQKTSILILALFAIAEAVPTTGPIRVRRQVLGGSLASNPAGGADARLNLSKGIGNPNHNVVGQVFAAGNTQSGPVTTGGTLAYNNAGHGASLTKTHTPGVKDVFQQEAHANLFNNGRHNLDAKVFASQNKLANGFEFQRNGAGLDYSHINGHGASLTHSNFPGIGQQLGLDGRANLWSSPNRATTLDLTGSASKWTSGPFANQKPNFGAGLGLSHHFG.

Positions 1–17 (MQKTSILILALFAIAEA) are cleaved as a signal peptide. Residues 18–28 (VPTTGPIRVRR) constitute a propeptide that is removed on maturation.

Belongs to the attacin/sarcotoxin-2 family. Hemolymph (at protein level).

It is found in the secreted. Hemolymph antibacterial protein. The protein is Attacin-B (AttB) of Drosophila melanogaster (Fruit fly).